A 201-amino-acid chain; its full sequence is Large ribosomal subunit protein uL4 (201 aa).

The segment at 44 to 71 is disordered; it reads RAQKTRAEVSGSGKKPWRQKGTGRARSG.

It belongs to the universal ribosomal protein uL4 family. In terms of assembly, part of the 50S ribosomal subunit.

Functionally, one of the primary rRNA binding proteins, this protein initially binds near the 5'-end of the 23S rRNA. It is important during the early stages of 50S assembly. It makes multiple contacts with different domains of the 23S rRNA in the assembled 50S subunit and ribosome. In terms of biological role, forms part of the polypeptide exit tunnel. The polypeptide is Large ribosomal subunit protein uL4 (Photorhabdus laumondii subsp. laumondii (strain DSM 15139 / CIP 105565 / TT01) (Photorhabdus luminescens subsp. laumondii)).